The chain runs to 118 residues: uncharacterized protein (118 aa).

The helical transmembrane segment at 95 to 115 (IIINLVIILAMYAPEIIGKLL) threads the bilayer.

The protein belongs to the M.jannaschii MJ0023/MJ0349/MJ1072/MJ1074/MJ1107/MJECL16 family.

The protein resides in the membrane. This is an uncharacterized protein from Methanocaldococcus jannaschii (strain ATCC 43067 / DSM 2661 / JAL-1 / JCM 10045 / NBRC 100440) (Methanococcus jannaschii).